A 212-amino-acid polypeptide reads, in one-letter code: Adenylate kinase (212 aa).

10–15 (GAGKGT) provides a ligand contact to ATP. The NMP stretch occupies residues 30-59 (STGDMFRAAMVNQTEMGVLAKSYIDKGELV). AMP contacts are provided by residues Thr-31, Arg-36, 57 to 59 (ELV), 86 to 89 (GYPR), and Gln-93. The tract at residues 127–159 (GRIIHRVTGETFHKVFNPPVDYKEEDYYQREDD) is LID. Residues Arg-128 and 137-138 (TF) each bind ATP. AMP is bound by residues Arg-156 and Arg-167. Residue Gln-195 participates in ATP binding.

Belongs to the adenylate kinase family. In terms of assembly, monomer.

The protein resides in the cytoplasm. The catalysed reaction is AMP + ATP = 2 ADP. It participates in purine metabolism; AMP biosynthesis via salvage pathway; AMP from ADP: step 1/1. Catalyzes the reversible transfer of the terminal phosphate group between ATP and AMP. Plays an important role in cellular energy homeostasis and in adenine nucleotide metabolism. The sequence is that of Adenylate kinase from Streptococcus pneumoniae (strain 70585).